Reading from the N-terminus, the 1345-residue chain is DNA-directed RNA polymerase subunit beta (1345 aa).

It belongs to the RNA polymerase beta chain family. The RNAP catalytic core consists of 2 alpha, 1 beta, 1 beta' and 1 omega subunit. When a sigma factor is associated with the core the holoenzyme is formed, which can initiate transcription.

It catalyses the reaction RNA(n) + a ribonucleoside 5'-triphosphate = RNA(n+1) + diphosphate. In terms of biological role, DNA-dependent RNA polymerase catalyzes the transcription of DNA into RNA using the four ribonucleoside triphosphates as substrates. The protein is DNA-directed RNA polymerase subunit beta of Shewanella sp. (strain ANA-3).